The following is a 213-amino-acid chain: Orotate phosphoribosyltransferase (213 aa).

Lys-26 contacts 5-phospho-alpha-D-ribose 1-diphosphate. 34–35 (FF) contributes to the orotate binding site. 5-phospho-alpha-D-ribose 1-diphosphate is bound by residues 72 to 73 (YK), Arg-99, Lys-100, Lys-103, His-105, and 124 to 132 (DDVITAGTA). Orotate is bound by residues Thr-128 and Arg-156.

It belongs to the purine/pyrimidine phosphoribosyltransferase family. PyrE subfamily. As to quaternary structure, homodimer. It depends on Mg(2+) as a cofactor.

It catalyses the reaction orotidine 5'-phosphate + diphosphate = orotate + 5-phospho-alpha-D-ribose 1-diphosphate. The protein operates within pyrimidine metabolism; UMP biosynthesis via de novo pathway; UMP from orotate: step 1/2. Catalyzes the transfer of a ribosyl phosphate group from 5-phosphoribose 1-diphosphate to orotate, leading to the formation of orotidine monophosphate (OMP). This chain is Orotate phosphoribosyltransferase, found in Vibrio vulnificus (strain CMCP6).